Consider the following 93-residue polypeptide: DNA-directed RNA polymerase subunit omega (93 aa).

It belongs to the RNA polymerase subunit omega family. In terms of assembly, the RNAP catalytic core consists of 2 alpha, 1 beta, 1 beta' and 1 omega subunit. When a sigma factor is associated with the core the holoenzyme is formed, which can initiate transcription.

The enzyme catalyses RNA(n) + a ribonucleoside 5'-triphosphate = RNA(n+1) + diphosphate. Functionally, promotes RNA polymerase assembly. Latches the N- and C-terminal regions of the beta' subunit thereby facilitating its interaction with the beta and alpha subunits. In Acinetobacter baylyi (strain ATCC 33305 / BD413 / ADP1), this protein is DNA-directed RNA polymerase subunit omega.